Consider the following 586-residue polypeptide: Ezrin (586 aa).

Positions 2-295 (PKPINVRVTT…GNHELYMRRR (294 aa)) constitute an FERM domain. At K60 the chain carries N6-acetyllysine. The [IL]-x-C-x-x-[DE] motif signature appears at 115–120 (IYCPPE). Phosphotyrosine; by PDGFR is present on Y146. The interaction with SCYL3 stretch occupies residues 244-586 (EIRNISFNDK…KQRIDEFEAM (343 aa)). Residues 302-462 (VQQMKAQARE…QDDLVKTKEE (161 aa)) are a coiled coil. The interval 306–338 (KAQAREEKHQKQLERQQLETEKKRRETVEREKE) is disordered. Residues 308-338 (QAREEKHQKQLERQQLETEKKRRETVEREKE) are compositionally biased toward basic and acidic residues. S366 is subject to Phosphoserine. A Phosphotyrosine modification is found at Y478. S535 is modified (phosphoserine). T567 bears the Phosphothreonine; by ROCK2 and PKC/PRKCI mark.

As to quaternary structure, interacts with PODXL and NHERF2. Found in a complex with EZR, PODXL and NHERF2. Interacts with PALS1. Interacts with MCC, PLEKHG6, SCYL3/PACE1, NHERF1 and TMEM8B. Interacts (when phosphorylated) with FES/FPS. Interacts with dimeric S100P, the interaction may be activating through unmasking of F-actin binding sites. Identified in complexes that contain VIM, EZR, AHNAK, BFSP1, BFSP2, ANK2, PLEC, PRX and spectrin. Detected in a complex composed of at least EZR, AHNAK, PPL and PRX. Interacts with PDPN (via cytoplasmic domain); activates RHOA and promotes epithelial-mesenchymal transition. Interacts with SPN/CD43 cytoplasmic tail, CD44 and ICAM2. Interacts with SLC9A3; interaction targets SLC9A3 to the apical membrane. Interacts with SLC9A1; regulates interactions of SLC9A1 with cytoskeletal and promotes stress fiber formation. Interacts with CLIC5; may work together in a complex which also includes RDX and MYO6 to stabilize linkages between the plasma membrane and subjacent actin cytoskeleton at the base of stereocilia. Phosphorylated by tyrosine-protein kinases. Phosphorylation by ROCK2 suppresses the head-to-tail association of the N-terminal and C-terminal halves resulting in an opened conformation which is capable of actin and membrane-binding. In terms of processing, S-nitrosylation is induced by interferon-gamma and oxidatively-modified low-densitity lipoprotein (LDL(ox)) possibly implicating the iNOS-S100A8/9 transnitrosylase complex. In terms of tissue distribution, glomerular epithelium cell (podocyte). Expressed in cerebrum, cerebellum and hippocampus (at protein level). Expressed in the small intestine, lung, kidney and ovaries.

It is found in the apical cell membrane. It localises to the cell projection. Its subcellular location is the microvillus membrane. The protein localises to the ruffle membrane. The protein resides in the cytoplasm. It is found in the cell cortex. It localises to the cytoskeleton. Its subcellular location is the microvillus. Its activity is regulated as follows. A head-to-tail association, of the N-terminal and C-terminal halves results in a closed conformation (inactive form) which is incapable of actin or membrane-binding. Probably involved in connections of major cytoskeletal structures to the plasma membrane. In epithelial cells, required for the formation of microvilli and membrane ruffles on the apical pole. Along with PLEKHG6, required for normal macropinocytosis. The protein is Ezrin (Ezr) of Rattus norvegicus (Rat).